Here is a 195-residue protein sequence, read N- to C-terminus: MFVPYVIERTSRGERSYDIYSRLLKDRIVMLSGEINDEVASSVVAQLLFLEAEDPDKDIYLYINSPGGVVTSGFSIYDTMNYIKPAVSTICIGQAASMGAFLLSCGEKGKRYALPNARIMIHQPLGGAQGQATDIEITTKEILRIKATLNKILAENSGQKLSKIEKDTDRDFYMSAQEAVKYGLIDKVLEKSLTE.

Catalysis depends on serine 97, which acts as the Nucleophile. Residue histidine 122 is part of the active site.

The protein belongs to the peptidase S14 family. In terms of assembly, fourteen ClpP subunits assemble into 2 heptameric rings which stack back to back to give a disk-like structure with a central cavity, resembling the structure of eukaryotic proteasomes.

The protein localises to the cytoplasm. It carries out the reaction Hydrolysis of proteins to small peptides in the presence of ATP and magnesium. alpha-casein is the usual test substrate. In the absence of ATP, only oligopeptides shorter than five residues are hydrolyzed (such as succinyl-Leu-Tyr-|-NHMec, and Leu-Tyr-Leu-|-Tyr-Trp, in which cleavage of the -Tyr-|-Leu- and -Tyr-|-Trp bonds also occurs).. In terms of biological role, cleaves peptides in various proteins in a process that requires ATP hydrolysis. Has a chymotrypsin-like activity. Plays a major role in the degradation of misfolded proteins. The chain is ATP-dependent Clp protease proteolytic subunit from Campylobacter hominis (strain ATCC BAA-381 / DSM 21671 / CCUG 45161 / LMG 19568 / NCTC 13146 / CH001A).